Reading from the N-terminus, the 166-residue chain is NADH-quinone oxidoreductase subunit B 1 (166 aa).

Residues Cys39, Cys40, Cys106, and Cys135 each contribute to the [4Fe-4S] cluster site.

It belongs to the complex I 20 kDa subunit family. NDH-1 is composed of 14 different subunits. Subunits NuoB, C, D, E, F, and G constitute the peripheral sector of the complex. [4Fe-4S] cluster is required as a cofactor.

The protein resides in the cell membrane. The enzyme catalyses a quinone + NADH + 5 H(+)(in) = a quinol + NAD(+) + 4 H(+)(out). NDH-1 shuttles electrons from NADH, via FMN and iron-sulfur (Fe-S) centers, to quinones in the respiratory chain. The immediate electron acceptor for the enzyme in this species is believed to be a menaquinone. Couples the redox reaction to proton translocation (for every two electrons transferred, four hydrogen ions are translocated across the cytoplasmic membrane), and thus conserves the redox energy in a proton gradient. This Symbiobacterium thermophilum (strain DSM 24528 / JCM 14929 / IAM 14863 / T) protein is NADH-quinone oxidoreductase subunit B 1.